Reading from the N-terminus, the 354-residue chain is UDP-N-acetylglucosamine--N-acetylmuramyl-(pentapeptide) pyrophosphoryl-undecaprenol N-acetylglucosamine transferase 3 (354 aa).

Residues 12 to 14 (TAG), arginine 163, serine 193, and glutamine 287 contribute to the UDP-N-acetyl-alpha-D-glucosamine site.

It belongs to the glycosyltransferase 28 family. MurG subfamily.

Its subcellular location is the cell membrane. It carries out the reaction di-trans,octa-cis-undecaprenyl diphospho-N-acetyl-alpha-D-muramoyl-L-alanyl-D-glutamyl-meso-2,6-diaminopimeloyl-D-alanyl-D-alanine + UDP-N-acetyl-alpha-D-glucosamine = di-trans,octa-cis-undecaprenyl diphospho-[N-acetyl-alpha-D-glucosaminyl-(1-&gt;4)]-N-acetyl-alpha-D-muramoyl-L-alanyl-D-glutamyl-meso-2,6-diaminopimeloyl-D-alanyl-D-alanine + UDP + H(+). The protein operates within cell wall biogenesis; peptidoglycan biosynthesis. In terms of biological role, cell wall formation. Catalyzes the transfer of a GlcNAc subunit on undecaprenyl-pyrophosphoryl-MurNAc-pentapeptide (lipid intermediate I) to form undecaprenyl-pyrophosphoryl-MurNAc-(pentapeptide)GlcNAc (lipid intermediate II). The polypeptide is UDP-N-acetylglucosamine--N-acetylmuramyl-(pentapeptide) pyrophosphoryl-undecaprenol N-acetylglucosamine transferase 3 (Bacillus cereus (strain ATCC 14579 / DSM 31 / CCUG 7414 / JCM 2152 / NBRC 15305 / NCIMB 9373 / NCTC 2599 / NRRL B-3711)).